Here is a 244-residue protein sequence, read N- to C-terminus: Inactive chemokine-binding protein (244 aa).

The tract at residues 1-79 is disordered; the sequence is MHVPASLQQS…STSVEDVDPP (79 aa). A compositionally biased stretch (polar residues) spans 37–53; sequence QDQTPTNDKICQSVTEI. The segment covering 54–77 has biased composition (acidic residues); the sequence is TESESDPDPEVESEDDSTSVEDVD.

It belongs to the orthopoxvirus OPG001 family.

It is found in the host cytoplasm. Its function is as follows. The protein is truncated in this vaccinal strain and presumably inactive, because the lack of signal peptide prevents the protein of being secreted. In the wild-type viruses inhibits host immune defense by binding to host chemokines. Binds host CC chemokines (beta chemokines) such as RANTES with high affinity, but not CXC or C chemokines (alpha and gamma chemokines). The polypeptide is Inactive chemokine-binding protein (OPG001) (Vaccinia virus (strain Western Reserve) (VACV)).